The primary structure comprises 78 residues: Large ribosomal subunit protein bL28 (78 aa).

Residues 1-29 are disordered; sequence MSAHCQVTGRKPSFGKSVSHSHRRTSRRW.

It belongs to the bacterial ribosomal protein bL28 family.

In Corynebacterium glutamicum (strain ATCC 13032 / DSM 20300 / JCM 1318 / BCRC 11384 / CCUG 27702 / LMG 3730 / NBRC 12168 / NCIMB 10025 / NRRL B-2784 / 534), this protein is Large ribosomal subunit protein bL28.